The chain runs to 242 residues: Uridylate kinase (242 aa).

Position 11 to 14 (11 to 14 (KLSG)) interacts with ATP. Residues 19–24 (GEKGAG) form an involved in allosteric activation by GTP region. Position 53 (glycine 53) interacts with UMP. ATP contacts are provided by glycine 54 and arginine 58. UMP is bound by residues aspartate 73 and 134-141 (IGSPYFST). ATP-binding residues include asparagine 162, tyrosine 168, and aspartate 171.

Belongs to the UMP kinase family. In terms of assembly, homohexamer.

The protein resides in the cytoplasm. It carries out the reaction UMP + ATP = UDP + ADP. The protein operates within pyrimidine metabolism; CTP biosynthesis via de novo pathway; UDP from UMP (UMPK route): step 1/1. With respect to regulation, allosterically activated by GTP. Inhibited by UTP. In terms of biological role, catalyzes the reversible phosphorylation of UMP to UDP. This is Uridylate kinase from Streptococcus pyogenes serotype M2 (strain MGAS10270).